Consider the following 328-residue polypeptide: Alpha-tubulin N-acetyltransferase 2 (328 aa).

The 181-residue stretch at 5-185 (SQVALLPKLS…NNFVVFHRYF (181 aa)) folds into the N-acetyltransferase domain. Acetyl-CoA-binding positions include 119 to 132 (FFVD…GFGK) and 155 to 164 (SVKFLAFLRK). 2 disordered regions span residues 219–261 (EYQS…PGKK) and 282–328 (GGDP…TPEH). The span at 238-248 (TPPPPLPPPLV) shows a compositional bias: pro residues. Polar residues predominate over residues 312-328 (PTRSGVQYNIISGTPEH).

The protein belongs to the acetyltransferase ATAT1 family.

It carries out the reaction L-lysyl-[alpha-tubulin] + acetyl-CoA = N(6)-acetyl-L-lysyl-[alpha-tubulin] + CoA + H(+). In terms of biological role, specifically acetylates 'Lys-40' in alpha-tubulin on the lumenal side of microtubules. Promotes microtubule destabilization and accelerates microtubule dynamics; this activity may be independent of acetylation activity. Acetylates alpha-tubulin with a slow enzymatic rate, due to a catalytic site that is not optimized for acetyl transfer. Enters the microtubule through each end and diffuses quickly throughout the lumen of microtubules. Acetylates only long/old microtubules because of its slow acetylation rate since it does not have time to act on dynamically unstable microtubules before the enzyme is released. The sequence is that of Alpha-tubulin N-acetyltransferase 2 from Trypanosoma cruzi (strain CL Brener).